Consider the following 325-residue polypeptide: 5-dehydro-2-deoxygluconokinase (325 aa).

Belongs to the carbohydrate kinase PfkB family.

It carries out the reaction 5-dehydro-2-deoxy-D-gluconate + ATP = 6-phospho-5-dehydro-2-deoxy-D-gluconate + ADP + H(+). It functions in the pathway polyol metabolism; myo-inositol degradation into acetyl-CoA; acetyl-CoA from myo-inositol: step 5/7. Catalyzes the phosphorylation of 5-dehydro-2-deoxy-D-gluconate (2-deoxy-5-keto-D-gluconate or DKG) to 6-phospho-5-dehydro-2-deoxy-D-gluconate (DKGP). The sequence is that of 5-dehydro-2-deoxygluconokinase from Listeria innocua serovar 6a (strain ATCC BAA-680 / CLIP 11262).